Reading from the N-terminus, the 420-residue chain is RNA-directed RNA polymerase (420 aa).

The region spanning 199-325 (GTICETDISG…IWFKGLEEYL (127 aa)) is the RdRp catalytic domain.

It belongs to the ssRNA positive-strand viruses RNA-directed RNA polymerase family. In terms of processing, might be cleaved to release the mature protein(s).

It carries out the reaction RNA(n) + a ribonucleoside 5'-triphosphate = RNA(n+1) + diphosphate. Functionally, RNA-dependent RNA polymerase which replicates the viral genome. In Mushroom bacilliform virus (isolate Australia/AUS LF-1) (MBV), this protein is RNA-directed RNA polymerase.